The following is a 455-amino-acid chain: Na(+)/H(+) antiporter NhaA (455 aa).

11 helical membrane-spanning segments follow: residues 31–51 (ASGILLIVSTAAALVWANSPW), 83–103 (GLMSIFFFLVGLEIKREVLIG), 113–133 (FPLIAAVGGTVVPAVIYLLCV), 141–161 (GWGIPMATDIAFALGVLILLG), 170–190 (VFVTALAIVDDIIAVLVIALF), 198–218 (VSLLVALGGVGIAFGFNLLGI), 231–251 (IWAAVLKSGVHATVAGVLLAF), 309–329 (GLQPWVSFLIMPLFAFSNAGV), 345–365 (IGVALGLFLGKPLGIWLFAWL), 383–403 (IFGASWICGIGFTMSLFIASL), and 414–434 (SKIGTLAASLVAGVCGSVVLW).

The protein belongs to the NhaA Na(+)/H(+) (TC 2.A.33) antiporter family.

It is found in the cell inner membrane. The enzyme catalyses Na(+)(in) + 2 H(+)(out) = Na(+)(out) + 2 H(+)(in). Functionally, na(+)/H(+) antiporter that extrudes sodium in exchange for external protons. The polypeptide is Na(+)/H(+) antiporter NhaA (Koribacter versatilis (strain Ellin345)).